Here is a 67-residue protein sequence, read N- to C-terminus: Protein AaeX (67 aa).

2 helical membrane passes run 3–23 (LFPVIVVFGLSFPPIFFELLL) and 43–63 (FVWHPALFNTALYCCLFYLIS).

The protein belongs to the AaeX family.

The protein resides in the cell membrane. This chain is Protein AaeX, found in Escherichia coli (strain K12 / DH10B).